We begin with the raw amino-acid sequence, 87 residues long: Phosphocarrier protein HPr (87 aa).

Residues 1–87 (MAEKTFTITA…EEVIKEGLGE (87 aa)) enclose the HPr domain. His15 (pros-phosphohistidine intermediate) is an active-site residue. Ser46 bears the Phosphoserine; by HPrK/P mark.

The protein belongs to the HPr family.

The protein resides in the cytoplasm. With respect to regulation, phosphorylation on Ser-46 inhibits the phosphoryl transfer from enzyme I to HPr. General (non sugar-specific) component of the phosphoenolpyruvate-dependent sugar phosphotransferase system (sugar PTS). This major carbohydrate active-transport system catalyzes the phosphorylation of incoming sugar substrates concomitantly with their translocation across the cell membrane. The phosphoryl group from phosphoenolpyruvate (PEP) is transferred to the phosphoryl carrier protein HPr by enzyme I. Phospho-HPr then transfers it to the PTS EIIA domain. Functionally, P-Ser-HPr interacts with the catabolite control protein A (CcpA), forming a complex that binds to DNA at the catabolite response elements cre, operator sites preceding a large number of catabolite-regulated genes. Thus, P-Ser-HPr is a corepressor in carbon catabolite repression (CCR), a mechanism that allows bacteria to coordinate and optimize the utilization of available carbon sources. P-Ser-HPr also plays a role in inducer exclusion, in which it probably interacts with several non-PTS permeases and inhibits their transport activity. This chain is Phosphocarrier protein HPr (ptsH), found in Halalkalibacterium halodurans (strain ATCC BAA-125 / DSM 18197 / FERM 7344 / JCM 9153 / C-125) (Bacillus halodurans).